The following is a 308-amino-acid chain: Ribosomal RNA large subunit methyltransferase F (308 aa).

The protein belongs to the methyltransferase superfamily. METTL16/RlmF family.

The protein localises to the cytoplasm. The catalysed reaction is adenosine(1618) in 23S rRNA + S-adenosyl-L-methionine = N(6)-methyladenosine(1618) in 23S rRNA + S-adenosyl-L-homocysteine + H(+). Functionally, specifically methylates the adenine in position 1618 of 23S rRNA. The polypeptide is Ribosomal RNA large subunit methyltransferase F (Salmonella dublin (strain CT_02021853)).